The primary structure comprises 512 residues: ETS translocation variant 3 (512 aa).

A DNA-binding region (ETS) is located at residues 35–116 (IQLWHFILEL…KGKRFTYKFN (82 aa)). Residues 136–222 (VPQSAPPVPT…NAIGGGGIGH (87 aa)) form a disordered region. 3 positions are modified to phosphoserine: S139, S159, and S315. Positions 158–184 (HSPTNDVQPGRFSASSLTASGQESSNG) are enriched in polar residues. Positions 336–512 (PEESTQFSIK…QGLATAAADA (177 aa)) are disordered. The span at 380–406 (IKVEPASEKDPESLRQSAREKEEHTQE) shows a compositional bias: basic and acidic residues. K381 is covalently cross-linked (Glycyl lysine isopeptide (Lys-Gly) (interchain with G-Cter in SUMO2)). K388 carries the N6-acetyllysine; alternate modification. A Glycyl lysine isopeptide (Lys-Gly) (interchain with G-Cter in SUMO2); alternate cross-link involves residue K388. The span at 443 to 452 (EPLEVTEDIE) shows a compositional bias: acidic residues. Basic and acidic residues-rich tracts occupy residues 453 to 468 (DRPG…KEDA) and 479 to 491 (RWND…ELSK).

Belongs to the ETS family.

It is found in the nucleus. Functionally, transcriptional repressor that contribute to growth arrest during terminal macrophage differentiation by repressing target genes involved in Ras-dependent proliferation. Represses MMP1 promoter activity. This is ETS translocation variant 3 (ETV3) from Pan troglodytes (Chimpanzee).